The chain runs to 395 residues: Elongation factor Tu (395 aa).

Residues 10 to 204 form the tr-type G domain; the sequence is KSHVNIGTIG…AVDEYIPTPE (195 aa). The segment at 19 to 26 is G1; the sequence is GHVDHGKT. Residue 19–26 coordinates GTP; the sequence is GHVDHGKT. T26 is a Mg(2+) binding site. Residues 60 to 64 are G2; sequence GITIN. Positions 81-84 are G3; that stretch reads DCPG. GTP is bound by residues 81-85 and 136-139; these read DCPGH and NKMD. The G4 stretch occupies residues 136–139; sequence NKMD. The tract at residues 174 to 176 is G5; the sequence is SAL.

The protein belongs to the TRAFAC class translation factor GTPase superfamily. Classic translation factor GTPase family. EF-Tu/EF-1A subfamily. In terms of assembly, monomer.

The protein resides in the cytoplasm. It carries out the reaction GTP + H2O = GDP + phosphate + H(+). Functionally, GTP hydrolase that promotes the GTP-dependent binding of aminoacyl-tRNA to the A-site of ribosomes during protein biosynthesis. In Enterococcus faecalis (strain ATCC 700802 / V583), this protein is Elongation factor Tu.